The chain runs to 194 residues: Protein GrpE (194 aa).

Belongs to the GrpE family. Homodimer.

It is found in the cytoplasm. In terms of biological role, participates actively in the response to hyperosmotic and heat shock by preventing the aggregation of stress-denatured proteins, in association with DnaK and GrpE. It is the nucleotide exchange factor for DnaK and may function as a thermosensor. Unfolded proteins bind initially to DnaJ; upon interaction with the DnaJ-bound protein, DnaK hydrolyzes its bound ATP, resulting in the formation of a stable complex. GrpE releases ADP from DnaK; ATP binding to DnaK triggers the release of the substrate protein, thus completing the reaction cycle. Several rounds of ATP-dependent interactions between DnaJ, DnaK and GrpE are required for fully efficient folding. The protein is Protein GrpE of Aliivibrio salmonicida (strain LFI1238) (Vibrio salmonicida (strain LFI1238)).